Consider the following 365-residue polypeptide: Phospho-N-acetylmuramoyl-pentapeptide-transferase (365 aa).

10 helical membrane-spanning segments follow: residues 22-42, 74-94, 95-115, 134-154, 168-188, 201-221, 240-260, 267-287, 292-312, and 342-362; these read YISV…LALG, TMGG…WGDL, TSIY…IGFF, KFAL…YLLS, SLYI…IING, GLAI…AYIE, LAEV…FLWF, VFMG…IAVM, LIFF…MLQV, and KVVI…LAAI.

Belongs to the glycosyltransferase 4 family. MraY subfamily. Mg(2+) serves as cofactor.

The protein localises to the cell inner membrane. It carries out the reaction UDP-N-acetyl-alpha-D-muramoyl-L-alanyl-gamma-D-glutamyl-meso-2,6-diaminopimeloyl-D-alanyl-D-alanine + di-trans,octa-cis-undecaprenyl phosphate = di-trans,octa-cis-undecaprenyl diphospho-N-acetyl-alpha-D-muramoyl-L-alanyl-D-glutamyl-meso-2,6-diaminopimeloyl-D-alanyl-D-alanine + UMP. Its pathway is cell wall biogenesis; peptidoglycan biosynthesis. Functionally, catalyzes the initial step of the lipid cycle reactions in the biosynthesis of the cell wall peptidoglycan: transfers peptidoglycan precursor phospho-MurNAc-pentapeptide from UDP-MurNAc-pentapeptide onto the lipid carrier undecaprenyl phosphate, yielding undecaprenyl-pyrophosphoryl-MurNAc-pentapeptide, known as lipid I. This chain is Phospho-N-acetylmuramoyl-pentapeptide-transferase, found in Francisella tularensis subsp. novicida (strain U112).